A 122-amino-acid chain; its full sequence is Large ribosomal subunit protein uL14 (122 aa).

This sequence belongs to the universal ribosomal protein uL14 family. In terms of assembly, part of the 50S ribosomal subunit. Forms a cluster with proteins L3 and L19. In the 70S ribosome, L14 and L19 interact and together make contacts with the 16S rRNA in bridges B5 and B8.

Functionally, binds to 23S rRNA. Forms part of two intersubunit bridges in the 70S ribosome. The chain is Large ribosomal subunit protein uL14 from Gluconacetobacter diazotrophicus (strain ATCC 49037 / DSM 5601 / CCUG 37298 / CIP 103539 / LMG 7603 / PAl5).